A 505-amino-acid chain; its full sequence is Flagellin (505 aa).

The protein belongs to the bacterial flagellin family.

It localises to the secreted. The protein localises to the bacterial flagellum. Its function is as follows. Flagellin is the subunit protein which polymerizes to form the filaments of bacterial flagella. This Salmonella enteritidis protein is Flagellin (fliC).